Reading from the N-terminus, the 217-residue chain is Adenylate kinase (217 aa).

Residue 10–15 participates in ATP binding; sequence GSGKGT. The NMP stretch occupies residues 30–59; that stretch reads STGDLLRAAVAAGSELGKQAKAAMDAGELV. Residues Thr-31, Arg-36, 57-59, 85-88, and Gln-92 each bind AMP; these read ELV and GFPR. The segment at 126–164 is LID; that stretch reads GRRTCQACGAIYNIYFSPPEVDHRCDKCNSDQLVQRSDD. Arg-127 contributes to the ATP binding site. Residues Cys-130 and Cys-133 each coordinate Zn(2+). 136–137 contacts ATP; the sequence is IY. Zn(2+)-binding residues include Cys-150 and Cys-153. Residues Arg-161 and Arg-172 each contribute to the AMP site. Asp-200 is an ATP binding site.

It belongs to the adenylate kinase family. In terms of assembly, monomer.

It localises to the cytoplasm. It catalyses the reaction AMP + ATP = 2 ADP. It participates in purine metabolism; AMP biosynthesis via salvage pathway; AMP from ADP: step 1/1. Its function is as follows. Catalyzes the reversible transfer of the terminal phosphate group between ATP and AMP. Plays an important role in cellular energy homeostasis and in adenine nucleotide metabolism. The protein is Adenylate kinase of Nitrosococcus oceani (strain ATCC 19707 / BCRC 17464 / JCM 30415 / NCIMB 11848 / C-107).